Consider the following 426-residue polypeptide: Histidine--tRNA ligase (426 aa).

It belongs to the class-II aminoacyl-tRNA synthetase family. In terms of assembly, homodimer.

It is found in the cytoplasm. The catalysed reaction is tRNA(His) + L-histidine + ATP = L-histidyl-tRNA(His) + AMP + diphosphate + H(+). This Hydrogenovibrio crunogenus (strain DSM 25203 / XCL-2) (Thiomicrospira crunogena) protein is Histidine--tRNA ligase.